Consider the following 457-residue polypeptide: MENSTGLKSSLKTRHIVMLSLGGAIGSGLFLGSGKVIAQAGPSVLLSYVLAGLTLYVVMYGVGKMVIHQDDHKAGMAGVVAPFIGDHWAHFADWVYWATWMAVLIAEEAGVSTFLAILIPGVPLWVFALVVAVLGTAINLWSVKAFAETEYWLAFIKVAVILLLIALGIYLLVINDAHLGFVADSAQKVTTKSTAPSFAPNGFSGFLTSLLVVIFSFGGSELAAITVAETENPKVAIPRAIRGVLIRIISFYVIPIFLFLHLLPWSEVSNPDAASPFATIFARVGIPHADKIVLVIIVIAIFSAVNSAIYATSRSLYSRIQGSSTYVGKKLGKLSKNQVPTNAILVSSFVLFIGVLLSAVLGDGFWQFVAGSISFTISIVWILLLVAALVLYFKHKEVTNWFVKLATLVVLIALSLVFIMQIITNPWTLSVFALVICLLSYFSYRKKKSIIEKTFIL.

12 helical membrane-spanning segments follow: residues 16–36 (IVMLSLGGAIGSGLFLGSGKV), 43–63 (SVLLSYVLAGLTLYVVMYGVG), 91–111 (FADWVYWATWMAVLIAEEAGV), 114–134 (FLAILIPGVPLWVFALVVAVL), 154–174 (AFIKVAVILLLIALGIYLLVI), 205–225 (GFLTSLLVVIFSFGGSELAAI), 243–263 (GVLIRIISFYVIPIFLFLHLL), 292–312 (IVLVIIVIAIFSAVNSAIYAT), 342–362 (NAILVSSFVLFIGVLLSAVLG), 373–393 (ISFTISIVWILLLVAALVLYF), 403–423 (VKLATLVVLIALSLVFIMQII), and 424–444 (TNPWTLSVFALVICLLSYFSY).

This sequence belongs to the amino acid-polyamine-organocation (APC) superfamily. Amino acid transporter (AAT) (TC 2.A.3.1) family.

The protein resides in the cell membrane. Functionally, involved in phenylalanine and tyrosine uptake. Also has affinity for tryptophan. Plays no significant role in the excretion of accumulated phenylalanine. The sequence is that of Aromatic amino acid permease FywP from Lactococcus lactis subsp. cremoris (strain MG1363).